A 270-amino-acid chain; its full sequence is Peflin (270 aa).

A disordered region spans residues 1–97; the sequence is MSYQYGQGYS…YRQQGSAGNV (97 aa). 5 repeat units span residues 22–30, 44–54, 62–70, 72–81, and 83–91. The interval 22 to 91 is 5 X 9 AA approximate tandem repeat of [AP]-P-G-G-P-Y-G-G-P-P; it reads PPRAPYAGGP…QPQGGPYRQQ (70 aa). Composition is skewed to low complexity over residues 26 to 47 and 55 to 66; these read PYAGGPAAGQYGSPYGSAPPGQ and YGSYGQPGPRAP. The segment covering 67–84 has biased composition (gly residues); the sequence is YGGGQAPGGPYGGYGQPQ. 5 EF-hand domains span residues 100-135, 141-169, 170-202, 203-239, and 240-269; these read GVNPEAYQWFSTVDSDQSGYINAKELKQALMNFNNS, TCIMMLNMFDKTKSGRVDVFGFSALWTFL, QQWRAAFQQFDRDRSGSINTNEMHQALSQMGYN, LSPQFIQELVNRYSVRGGTGVLQLDRFIQVCTQLQSM, and TQAFREKDTGMTGNVRMSYEDFLSSAITRL. Ca(2+)-binding residues include Asp-113, Asp-115, Ser-117, Tyr-119, and Glu-124. Ca(2+) contacts are provided by Asp-180, Asp-182, Ser-184, Ser-186, and Glu-191.

In terms of assembly, heterodimer; heterodimerizes (via the EF-hand 5) with pdcd6.

It is found in the cytoplasm. The protein resides in the endoplasmic reticulum. It localises to the membrane. The protein localises to the cytoplasmic vesicle. Its subcellular location is the COPII-coated vesicle membrane. Calcium-binding protein that acts as an adapter that bridges unrelated proteins or stabilizes weak protein-protein complexes in response to calcium. Acts as a negative regulator of ER-Golgi transport. This chain is Peflin, found in Danio rerio (Zebrafish).